Consider the following 196-residue polypeptide: Sulfur-rich protein (196 aa).

The next 3 membrane-spanning stretches (helical) occupy residues 34–54 (VTAG…LIGW), 76–96 (ITLL…MFIF), and 105–125 (FWLI…SLCF).

The protein localises to the membrane. This Chlamydia pneumoniae (Chlamydophila pneumoniae) protein is Sulfur-rich protein (srp).